Here is a 505-residue protein sequence, read N- to C-terminus: MATIRADEISNIIRERIEQYNREVKIVNTGTVLQVGDGIARIYGLDEVMAGELVEFEEGTIGIALNLESKNVGVVLMGDGLLIQEGSSVKATGRIAQIPVSEAYLGRVINALAKPIDGRGEIYSSESRLIESPAPGIISRRSVYEPLQTGLIAIDAMIPIGRGQRELIIGDRQTGKTAVATDTILNQQGNNVICVYVAIGQKASSVAQVVNALQERGAMEYTIVVAEAADSPATLQYLAPYTGAALAEYFMYRERHTLIIYDDPSKQAQAYRQMSLLLRRPPGREAYPGDVFYLHSRLLERAAKLSSRLGEGSMTALPIVETQSGDVSAYIPTNVISITDGQIFLSADLFNAGIRPAINVGISVSRVGSAAQIKAMKQVAGKLKLELAQFAELEAFAQFSSDLDKATQNQLARGQRLRELLKQSQAKPLTVAEQILTIYTGTNGYLDSFEIAQVRKFLDELRDYVKTRKPQFEEIISSTKIFTEEAQALLKDAIQEQKELFLVQE.

Residue 170 to 177 (GDRQTGKT) participates in ATP binding.

It belongs to the ATPase alpha/beta chains family. In terms of assembly, F-type ATPases have 2 components, CF(1) - the catalytic core - and CF(0) - the membrane proton channel. CF(1) has five subunits: alpha(3), beta(3), gamma(1), delta(1), epsilon(1). CF(0) has four main subunits: a, b, b' and c.

Its subcellular location is the plastid. The protein localises to the chloroplast thylakoid membrane. It carries out the reaction ATP + H2O + 4 H(+)(in) = ADP + phosphate + 5 H(+)(out). In terms of biological role, produces ATP from ADP in the presence of a proton gradient across the membrane. The alpha chain is a regulatory subunit. This chain is ATP synthase subunit alpha, chloroplastic, found in Oenothera biennis (German evening primrose).